Consider the following 163-residue polypeptide: ATP synthase subunit b 1 (163 aa).

The chain crosses the membrane as a helical span at residues 7–27 (PETWVAIAFVILMGLFAYLGV).

Belongs to the ATPase B chain family. In terms of assembly, F-type ATPases have 2 components, F(1) - the catalytic core - and F(0) - the membrane proton channel. F(1) has five subunits: alpha(3), beta(3), gamma(1), delta(1), epsilon(1). F(0) has three main subunits: a(1), b(2) and c(10-14). The alpha and beta chains form an alternating ring which encloses part of the gamma chain. F(1) is attached to F(0) by a central stalk formed by the gamma and epsilon chains, while a peripheral stalk is formed by the delta and b chains.

The protein resides in the cell inner membrane. Its function is as follows. F(1)F(0) ATP synthase produces ATP from ADP in the presence of a proton or sodium gradient. F-type ATPases consist of two structural domains, F(1) containing the extramembraneous catalytic core and F(0) containing the membrane proton channel, linked together by a central stalk and a peripheral stalk. During catalysis, ATP synthesis in the catalytic domain of F(1) is coupled via a rotary mechanism of the central stalk subunits to proton translocation. Functionally, component of the F(0) channel, it forms part of the peripheral stalk, linking F(1) to F(0). The polypeptide is ATP synthase subunit b 1 (Bradyrhizobium sp. (strain BTAi1 / ATCC BAA-1182)).